The sequence spans 367 residues: Biotin--protein ligase 1, chloroplastic (367 aa).

Residues 1–37 (MEAVRSTTTLSNFHLLNILVLRSLKPLHRLSFSFSAS) constitute a chloroplast transit peptide. In terms of domain architecture, BPL/LPL catalytic spans 105-289 (IITHRFGRFL…KFEKFFDLFM (185 aa)). Residues 122 to 124 (STH), Q145, 149 to 151 (RGR), and K220 contribute to the biotin site.

Belongs to the biotin--protein ligase family. Expressed in roots, leaves, stems, flowers, siliques and seeds.

The protein resides in the plastid. It localises to the chloroplast. Its subcellular location is the cytoplasm. It is found in the cytosol. The catalysed reaction is apo-[3-methylcrotonoyl-CoA:carbon-dioxide ligase (ADP-forming)] + biotin + ATP = holo-[3-methylcrotonoyl-CoA:carbon-dioxide ligase (ADP-forming)] + AMP + diphosphate + H(+). It catalyses the reaction biotin + L-lysyl-[protein] + ATP = N(6)-biotinyl-L-lysyl-[protein] + AMP + diphosphate + H(+). In terms of biological role, plays a major role in biotin-dependent carboxylase biotinylation. Catalyzes the addition of biotin to the biotin carboxyl carrier protein (BCCP) subunit of acetyl-CoA carboxylase. Can also biotinylate methylcrotonyl-CoA carboxylase. Is responsible for most, if not all, biotin--protein ligase activity in Arabidopsis. Is essential for plant viability and required for ovule development. This chain is Biotin--protein ligase 1, chloroplastic, found in Arabidopsis thaliana (Mouse-ear cress).